Reading from the N-terminus, the 600-residue chain is Tripeptidyl-peptidase 1 (600 aa).

Positions 1–22 are cleaved as a signal peptide; it reads MNIKFNLIIIILFILFISNVNC. A propeptide spans 23-220 (removed in mature form); the sequence is KKIKNKKHLT…GGGGKVNGIG (198 aa). Residues Asn-91, Asn-259, and Asn-266 are each glycosylated (N-linked (GlcNAc...) asparagine). Positions 248–600 constitute a Peptidase S53 domain; sequence YLSPDLIRKE…FDELVKYCLE (353 aa). Residues Glu-318 and Asp-322 each act as charge relay system in the active site. Cys-411 and Cys-570 form a disulfide bridge. N-linked (GlcNAc...) asparagine glycosylation is found at Asn-475 and Asn-483. Ser-514 serves as the catalytic Charge relay system. Residues Asp-559, Ile-560, Gly-579, and Asp-581 each contribute to the Ca(2+) site.

In terms of assembly, monomer. Requires Ca(2+) as cofactor. Activated by autocatalytic proteolytical processing upon acidification. N-glycosylation is required for processing and activity.

The protein localises to the secreted. It carries out the reaction Release of an N-terminal tripeptide from a polypeptide, but also has endopeptidase activity.. Serine protease with tripeptidyl-peptidase I activity. The polypeptide is Tripeptidyl-peptidase 1 (tpp1) (Dictyostelium discoideum (Social amoeba)).